A 382-amino-acid polypeptide reads, in one-letter code: Lipid-A-disaccharide synthase (382 aa).

Belongs to the LpxB family.

It catalyses the reaction 2-N,3-O-bis[(3R)-3-hydroxytetradecanoyl]-alpha-D-glucosaminyl 1-phosphate + UDP-2-N,3-O-bis[(3R)-3-hydroxytetradecanoyl]-alpha-D-glucosamine = lipid A disaccharide (E. coli) + UDP + H(+). It carries out the reaction a lipid X + a UDP-2-N,3-O-bis[(3R)-3-hydroxyacyl]-alpha-D-glucosamine = a lipid A disaccharide + UDP + H(+). It participates in glycolipid biosynthesis; lipid IV(A) biosynthesis; lipid IV(A) from (3R)-3-hydroxytetradecanoyl-[acyl-carrier-protein] and UDP-N-acetyl-alpha-D-glucosamine: step 5/6. Functionally, condensation of UDP-2,3-diacylglucosamine and 2,3-diacylglucosamine-1-phosphate to form lipid A disaccharide, a precursor of lipid A, a phosphorylated glycolipid that anchors the lipopolysaccharide to the outer membrane of the cell. This chain is Lipid-A-disaccharide synthase, found in Escherichia coli (strain SMS-3-5 / SECEC).